Consider the following 484-residue polypeptide: Glycogen synthase (484 aa).

Lys-18 is an ADP-alpha-D-glucose binding site.

It belongs to the glycosyltransferase 1 family. Bacterial/plant glycogen synthase subfamily.

It carries out the reaction [(1-&gt;4)-alpha-D-glucosyl](n) + ADP-alpha-D-glucose = [(1-&gt;4)-alpha-D-glucosyl](n+1) + ADP + H(+). It functions in the pathway glycan biosynthesis; glycogen biosynthesis. Functionally, synthesizes alpha-1,4-glucan chains using ADP-glucose. This is Glycogen synthase from Vibrio cholerae serotype O1 (strain ATCC 39541 / Classical Ogawa 395 / O395).